Here is a 360-residue protein sequence, read N- to C-terminus: Peptide chain release factor 1 (360 aa).

Q235 is modified (N5-methylglutamine).

Belongs to the prokaryotic/mitochondrial release factor family. Post-translationally, methylated by PrmC. Methylation increases the termination efficiency of RF1.

Its subcellular location is the cytoplasm. In terms of biological role, peptide chain release factor 1 directs the termination of translation in response to the peptide chain termination codons UAG and UAA. The sequence is that of Peptide chain release factor 1 from Burkholderia thailandensis (strain ATCC 700388 / DSM 13276 / CCUG 48851 / CIP 106301 / E264).